The following is a 501-amino-acid chain: Melianol synthase CYP71BQ5 (501 aa).

A helical transmembrane segment spans residues methionine 1–histidine 21. Cysteine 439 provides a ligand contact to heme.

This sequence belongs to the cytochrome P450 family. Heme is required as a cofactor. As to expression, mainly expressed in petioles and roots, and, to a lower extent, in leaves.

It localises to the membrane. It carries out the reaction dihydroniloticin + 2 reduced [NADPH--hemoprotein reductase] + 2 O2 = melianol + 2 oxidized [NADPH--hemoprotein reductase] + 3 H2O + 2 H(+). It participates in secondary metabolite biosynthesis; terpenoid biosynthesis. Monooxygenase involved in the biosynthesis of limonoids triterpene natural products such as azadirachtin, an antifeedant widely used as bioinsecticide, and possessing many medicinal applications including anti-tumoral, anti-malarial, anti-rheumatic, antibacterial, anti-inflammatory, anti-pyretic and diuretic effects. Catalyzes the conversion of dihydroniloticin to the protolimonoid melianol. The chain is Melianol synthase CYP71BQ5 from Melia azedarach (Chinaberry tree).